A 245-amino-acid chain; its full sequence is 3-deoxy-manno-octulosonate cytidylyltransferase (245 aa).

Belongs to the KdsB family.

It localises to the cytoplasm. The catalysed reaction is 3-deoxy-alpha-D-manno-oct-2-ulosonate + CTP = CMP-3-deoxy-beta-D-manno-octulosonate + diphosphate. Its pathway is nucleotide-sugar biosynthesis; CMP-3-deoxy-D-manno-octulosonate biosynthesis; CMP-3-deoxy-D-manno-octulosonate from 3-deoxy-D-manno-octulosonate and CTP: step 1/1. It participates in bacterial outer membrane biogenesis; lipopolysaccharide biosynthesis. In terms of biological role, activates KDO (a required 8-carbon sugar) for incorporation into bacterial lipopolysaccharide in Gram-negative bacteria. The chain is 3-deoxy-manno-octulosonate cytidylyltransferase from Rhodopseudomonas palustris (strain HaA2).